The primary structure comprises 875 residues: Neurotrypsin (875 aa).

An N-terminal signal peptide occupies residues 1 to 20; that stretch reads MTLARFVLALVLGALPEVVX. N-linked (GlcNAc...) asparagine glycosylation occurs at Asn26. The tract at residues 31 to 88 is disordered; that stretch reads HRPRHSPPTGPHYPYYLPTQQRPPRTRPPPPLPRFPRPPRALPAQRPHALQAGHTPRP. The segment covering 56-71 has biased composition (pro residues); sequence TRPPPPLPRFPRPPRA. Positions 93–165 constitute a Kringle domain; sequence CPAGEPWVSV…GKVDWGYCDC (73 aa). Cystine bridges form between Cys93/Cys165, Cys109/Cys149, Cys138/Cys163, Cys195/Cys259, Cys208/Cys269, Cys239/Cys249, Cys305/Cys369, Cys318/Cys379, Cys349/Cys359, Cys412/Cys475, Cys425/Cys485, Cys455/Cys465, Cys525/Cys589, Cys538/Cys599, Cys569/Cys579, Cys619/Cys750, Cys661/Cys677, Cys765/Cys831, Cys794/Cys808, and Cys821/Cys850. 4 SRCR domains span residues 170–271, 280–381, 387–487, and 500–601; these read IRLR…TCSF, IRLV…SCTP, IRLA…ACYP, and VRLM…ICDY. Residues 619–630 are zymogen activation region; it reads CGLRLLHRRQKR. The Peptidase S1 domain occupies 631 to 874; sequence IIGGKNSLRG…FVPWIKSVTK (244 aa). His676 functions as the Charge relay system in the catalytic mechanism. A glycan (N-linked (GlcNAc...) asparagine) is linked at Asn683. Asp726 (charge relay system) is an active-site residue. The active-site Charge relay system is the Ser825.

The protein belongs to the peptidase S1 family.

Its subcellular location is the secreted. Plays a role in neuronal plasticity and the proteolytic action may subserve structural reorganizations associated with learning and memory operations. This chain is Neurotrypsin (PRSS12), found in Nomascus leucogenys (Northern white-cheeked gibbon).